Here is a 255-residue protein sequence, read N- to C-terminus: 1-(5-phosphoribosyl)-5-[(5-phosphoribosylamino)methylideneamino] imidazole-4-carboxamide isomerase (255 aa).

Asp8 serves as the catalytic Proton acceptor. Asp129 acts as the Proton donor in catalysis.

This sequence belongs to the HisA/HisF family.

It is found in the cytoplasm. The catalysed reaction is 1-(5-phospho-beta-D-ribosyl)-5-[(5-phospho-beta-D-ribosylamino)methylideneamino]imidazole-4-carboxamide = 5-[(5-phospho-1-deoxy-D-ribulos-1-ylimino)methylamino]-1-(5-phospho-beta-D-ribosyl)imidazole-4-carboxamide. It functions in the pathway amino-acid biosynthesis; L-histidine biosynthesis; L-histidine from 5-phospho-alpha-D-ribose 1-diphosphate: step 4/9. The sequence is that of 1-(5-phosphoribosyl)-5-[(5-phosphoribosylamino)methylideneamino] imidazole-4-carboxamide isomerase from Gloeobacter violaceus (strain ATCC 29082 / PCC 7421).